Consider the following 359-residue polypeptide: Histidinol-phosphate aminotransferase (359 aa).

Position 212 is an N6-(pyridoxal phosphate)lysine (lysine 212).

The protein belongs to the class-II pyridoxal-phosphate-dependent aminotransferase family. Histidinol-phosphate aminotransferase subfamily. As to quaternary structure, homodimer. Requires pyridoxal 5'-phosphate as cofactor.

The catalysed reaction is L-histidinol phosphate + 2-oxoglutarate = 3-(imidazol-4-yl)-2-oxopropyl phosphate + L-glutamate. The protein operates within amino-acid biosynthesis; L-histidine biosynthesis; L-histidine from 5-phospho-alpha-D-ribose 1-diphosphate: step 7/9. In Buchnera aphidicola subsp. Schlechtendalia chinensis, this protein is Histidinol-phosphate aminotransferase.